The primary structure comprises 585 residues: Beta-(1--&gt;2)glucan export ATP-binding/permease protein NdvA (585 aa).

One can recognise an ABC transmembrane type-1 domain in the interval 21 to 301 (VGAIVIANIV…MKAFATQIFE (281 aa)). Helical transmembrane passes span 22-42 (GAIV…PILF), 55-75 (VAPM…AFVL), 136-156 (QHLA…AMDV), 158-178 (LSLI…VVMS), 245-265 (LNRI…TVLV), and 269-289 (ELGV…IGRL). One can recognise an ABC transporter domain in the interval 335–569 (VEFRDISFDF…NGRFAALLRA (235 aa)). An ATP-binding site is contributed by 368-375 (GPTGAGKT).

This sequence belongs to the ABC transporter superfamily. Beta-(1--&gt;2)glucan exporter (TC 3.A.1.108.1) family. In terms of assembly, homodimer.

The protein resides in the cell inner membrane. It catalyses the reaction [(1-&gt;2)-beta-D-glucosyl](n)(in) + ATP + H2O = [(1-&gt;2)-beta-D-glucosyl](n)(out) + ADP + phosphate + H(+). Involved in beta-(1--&gt;2)glucan export which is required for nodulation of legume roots. May be involved in other classes of oligosaccharides export. Transmembrane domains (TMD) form a pore in the inner membrane and the ATP-binding domain (NBD) is responsible for energy generation. This Rhizobium meliloti (strain 1021) (Ensifer meliloti) protein is Beta-(1--&gt;2)glucan export ATP-binding/permease protein NdvA.